The primary structure comprises 332 residues: Fructose-1,6-bisphosphatase class 1 (332 aa).

4 residues coordinate Mg(2+): glutamate 89, aspartate 110, leucine 112, and aspartate 113. Substrate contacts are provided by residues 113–116 (DGSS), asparagine 206, tyrosine 239, 257–259 (YLY), and lysine 269. A Mg(2+)-binding site is contributed by glutamate 275.

This sequence belongs to the FBPase class 1 family. In terms of assembly, homotetramer. Requires Mg(2+) as cofactor.

It localises to the cytoplasm. The enzyme catalyses beta-D-fructose 1,6-bisphosphate + H2O = beta-D-fructose 6-phosphate + phosphate. It functions in the pathway carbohydrate biosynthesis; gluconeogenesis. The protein is Fructose-1,6-bisphosphatase class 1 of Enterobacter sp. (strain 638).